Here is a 165-residue protein sequence, read N- to C-terminus: Inorganic pyrophosphatase (165 aa).

Substrate contacts are provided by Lys21, Arg35, and Tyr47. Residues Asp57, Asp62, and Asp94 each contribute to the Mg(2+) site. Residue Tyr131 coordinates substrate.

This sequence belongs to the PPase family. In terms of assembly, homotrimer. In presence of divalent cations the trimers aggregate to form a hexamer. Mg(2+) serves as cofactor.

The protein resides in the cytoplasm. The catalysed reaction is diphosphate + H2O = 2 phosphate + H(+). Its function is as follows. Catalyzes the hydrolysis of inorganic pyrophosphate (PPi) forming two phosphate ions. The polypeptide is Inorganic pyrophosphatase (Bacillus sp. (strain PS3)).